A 607-amino-acid chain; its full sequence is Protein PLASTID MOVEMENT IMPAIRED 2 (607 aa).

Coiled coils occupy residues 66 to 295 (KAKK…NAEL) and 329 to 445 (MLER…ESRR).

The protein belongs to the WEB family. Interacts with WEB1. As to expression, ubiquitous but preferentially in chloroplast-containing tissues.

The protein localises to the cytoplasm. Functionally, required for the chloroplast avoidance response under high intensity blue light. This avoidance response consists in the relocation of chloroplasts on the anticlinal side of exposed cells. Acts in association with WEB1 to maintain the velocity of chloroplast photorelocation movement via cp-actin filaments regulation. The polypeptide is Protein PLASTID MOVEMENT IMPAIRED 2 (PMI2) (Arabidopsis thaliana (Mouse-ear cress)).